A 64-amino-acid chain; its full sequence is Large ribosomal subunit protein bL35 (64 aa).

It belongs to the bacterial ribosomal protein bL35 family.

This is Large ribosomal subunit protein bL35 from Shewanella halifaxensis (strain HAW-EB4).